A 236-amino-acid chain; its full sequence is Probable metal transport system ATP-binding protein TC_0697 (236 aa).

The 232-residue stretch at 5–236 (LILENVSFRY…FCCNTFGKCS (232 aa)) folds into the ABC transporter domain. Residue 39 to 46 (GPNGGGKT) coordinates ATP.

Belongs to the ABC transporter superfamily.

The protein localises to the cell inner membrane. In terms of biological role, part of an ATP-driven transport system TC_0696/TC_0697/TC_0698 for a metal. Probably responsible for energy coupling to the transport system. The protein is Probable metal transport system ATP-binding protein TC_0697 of Chlamydia muridarum (strain MoPn / Nigg).